A 295-amino-acid chain; its full sequence is Protoheme IX farnesyltransferase 2 (295 aa).

The next 9 helical transmembrane spans lie at 9-29 (ITKP…FFLA), 36-56 (FALF…GCVF), 83-103 (LTLA…LLYV), 108-128 (LSAF…SLWL), 135-155 (GTLV…CAVS), 163-183 (VTLL…IAIF), 209-229 (IVLY…GGYA), 230-250 (GLGY…MAWG), and 264-284 (VFGF…VDSQ).

Belongs to the UbiA prenyltransferase family. Protoheme IX farnesyltransferase subfamily.

It is found in the cell inner membrane. The catalysed reaction is heme b + (2E,6E)-farnesyl diphosphate + H2O = Fe(II)-heme o + diphosphate. The protein operates within porphyrin-containing compound metabolism; heme O biosynthesis; heme O from protoheme: step 1/1. In terms of biological role, converts heme B (protoheme IX) to heme O by substitution of the vinyl group on carbon 2 of heme B porphyrin ring with a hydroxyethyl farnesyl side group. This is Protoheme IX farnesyltransferase 2 from Pseudomonas putida (strain W619).